The sequence spans 32 residues: Giant hemoglobin AIV chain (32 aa).

Belongs to the globin family. Giant hemoglobin is composed of four heme-containing chains (AI to AIV), and two linker chains (AV and AVI).

The polypeptide is Giant hemoglobin AIV chain (Lamellibrachia sp. (Deep-sea giant tube worm)).